The following is a 359-amino-acid chain: POU domain, class 5, transcription factor 1B (359 aa).

Disordered stretches follow at residues 1–53 (MAGH…GVGP) and 87–116 (QGGL…EPCT). At Ser111 the chain carries Phosphoserine. The region spanning 138–212 (DIKALQKELE…LLQKWVEEAD (75 aa)) is the POU-specific domain. A DNA-binding region (homeobox) is located at residues 229–288 (ARKRKRTSIENRVRGNLENLFLQCPKPTLQISHIAQQLGLEKDVVRVWFCNRRQKGKRSS). Position 235 is a phosphothreonine (Thr235). Phosphoserine is present on residues Ser236, Ser288, and Ser289. The disordered stretch occupies residues 287 to 322 (SSSDYAQREDFEAAGSPFSGGPVSFPPAPGPHFGTP). Residues 299–309 (AAGSPFSGGPV) are compositionally biased toward low complexity. The residue at position 354 (Ser354) is a Phosphoserine.

The protein belongs to the POU transcription factor family. Class-5 subfamily. Detected in epithelial cells of the prostate (at protein level). Detected at the mRNA level in several cancer tissues (breast, uterine cervix, lung, thyroid gland, esophagus, colon, urinary bladder, and glioma).

It localises to the nucleus. The protein localises to the cytoplasm. Functionally, shows weak transcriptional activator activity. This chain is POU domain, class 5, transcription factor 1B (POU5F1B), found in Homo sapiens (Human).